A 316-amino-acid polypeptide reads, in one-letter code: Retinol dehydrogenase 7 (316 aa).

33–57 (FITGCDSGFGNLLARQLDRRGMRVL) contributes to the NADP(+) binding site. Ser163 lines the substrate pocket. Catalysis depends on Tyr175, which acts as the Proton acceptor.

Belongs to the short-chain dehydrogenases/reductases (SDR) family. As to expression, highly expressed in liver. Also expressed in lung, eye, kidney, and brain.

The protein localises to the microsome. It is found in the endoplasmic reticulum. The enzyme catalyses all-trans-retinol--[retinol-binding protein] + NAD(+) = all-trans-retinal--[retinol-binding protein] + NADH + H(+). The protein operates within cofactor metabolism; retinol metabolism. Functionally, acts on androgens and retinols, i.e. has steroid 3-alpha- and 17-beta-dehydrogenase and cis/trans-retinol catalytic activities. The protein is Retinol dehydrogenase 7 (Rdh7) of Mus musculus (Mouse).